Here is an 85-residue protein sequence, read N- to C-terminus: Translation initiation factor IF-1 2 (85 aa).

One can recognise an S1-like domain in the interval 1 to 72; it reads MAKEELIEMH…SKGRITFRHI (72 aa).

It belongs to the IF-1 family. In terms of assembly, component of the 30S ribosomal translation pre-initiation complex which assembles on the 30S ribosome in the order IF-2 and IF-3, IF-1 and N-formylmethionyl-tRNA(fMet); mRNA recruitment can occur at any time during PIC assembly.

The protein localises to the cytoplasm. Functionally, one of the essential components for the initiation of protein synthesis. Stabilizes the binding of IF-2 and IF-3 on the 30S subunit to which N-formylmethionyl-tRNA(fMet) subsequently binds. Helps modulate mRNA selection, yielding the 30S pre-initiation complex (PIC). Upon addition of the 50S ribosomal subunit IF-1, IF-2 and IF-3 are released leaving the mature 70S translation initiation complex. This chain is Translation initiation factor IF-1 2, found in Polaromonas sp. (strain JS666 / ATCC BAA-500).